The sequence spans 135 residues: MTYAIIETGGKQIRVEPGRFYDIELLPTEPDEKVTIDSVLLVQHDGAVSIGQPLVTGATVEGTVMRHYRGRKVLVYKMKPKKKTRKKRGHRQEITRLMIDSITLNGEVFVAQGEAEKETPVLDETPAEEVETAAE.

Residues 114–135 are disordered; the sequence is EAEKETPVLDETPAEEVETAAE. The segment covering 125–135 has biased composition (acidic residues); that stretch reads TPAEEVETAAE.

This sequence belongs to the bacterial ribosomal protein bL21 family. As to quaternary structure, part of the 50S ribosomal subunit. Contacts protein L20.

This protein binds to 23S rRNA in the presence of protein L20. The sequence is that of Large ribosomal subunit protein bL21 from Nostoc punctiforme (strain ATCC 29133 / PCC 73102).